Here is an 864-residue protein sequence, read N- to C-terminus: uncharacterized protein (864 aa).

This is an uncharacterized protein from Rickettsia typhi (strain ATCC VR-144 / Wilmington).